We begin with the raw amino-acid sequence, 466 residues long: Ribulose bisphosphate carboxylase large chain (466 aa).

At Lys5 the chain carries N6,N6,N6-trimethyllysine. Substrate-binding residues include Asn114 and Thr164. Lys166 acts as the Proton acceptor in catalysis. Lys168 contributes to the substrate binding site. Lys192, Asp194, and Glu195 together coordinate Mg(2+). Residue Lys192 is modified to N6-carboxylysine. Residue His285 is the Proton acceptor of the active site. Substrate-binding residues include Arg286, His318, and Ser370.

Belongs to the RuBisCO large chain family. Type I subfamily. Heterohexadecamer of 8 large chains and 8 small chains; disulfide-linked. The disulfide link is formed within the large subunit homodimers. Requires Mg(2+) as cofactor. In terms of processing, the disulfide bond which can form in the large chain dimeric partners within the hexadecamer appears to be associated with oxidative stress and protein turnover.

Its subcellular location is the plastid. It is found in the chloroplast. It carries out the reaction 2 (2R)-3-phosphoglycerate + 2 H(+) = D-ribulose 1,5-bisphosphate + CO2 + H2O. The enzyme catalyses D-ribulose 1,5-bisphosphate + O2 = 2-phosphoglycolate + (2R)-3-phosphoglycerate + 2 H(+). Functionally, ruBisCO catalyzes two reactions: the carboxylation of D-ribulose 1,5-bisphosphate, the primary event in carbon dioxide fixation, as well as the oxidative fragmentation of the pentose substrate in the photorespiration process. Both reactions occur simultaneously and in competition at the same active site. The polypeptide is Ribulose bisphosphate carboxylase large chain (Averrhoa carambola (Star fruit)).